Reading from the N-terminus, the 161-residue chain is Peptidyl-prolyl cis-trans isomerase-like 3 (161 aa).

S2 is modified (N-acetylserine). The 153-residue stretch at 2-154 (SVTLHTDVGD…NDVHIKDITI (153 aa)) folds into the PPIase cyclophilin-type domain. R61 is modified (omega-N-methylarginine).

It belongs to the cyclophilin-type PPIase family. PPIL3 subfamily. Identified in the spliceosome C complex. Ubiquitous. Detected at low levels.

It catalyses the reaction [protein]-peptidylproline (omega=180) = [protein]-peptidylproline (omega=0). In terms of biological role, PPIases accelerate the folding of proteins. It catalyzes the cis-trans isomerization of proline imidic peptide bonds in oligopeptides. May be involved in pre-mRNA splicing. This Homo sapiens (Human) protein is Peptidyl-prolyl cis-trans isomerase-like 3 (PPIL3).